The chain runs to 251 residues: Protein FAM216A (251 aa).

The disordered stretch occupies residues 1 to 41 (MPSRWPGVAGPPALARTEGGEGSAGHSYPQNSKGTGEQHKA).

It belongs to the FAM216 family.

The chain is Protein FAM216A (Fam216a) from Mus musculus (Mouse).